The primary structure comprises 177 residues: Large ribosomal subunit protein uL6 (177 aa).

It belongs to the universal ribosomal protein uL6 family. As to quaternary structure, part of the 50S ribosomal subunit.

Functionally, this protein binds to the 23S rRNA, and is important in its secondary structure. It is located near the subunit interface in the base of the L7/L12 stalk, and near the tRNA binding site of the peptidyltransferase center. The sequence is that of Large ribosomal subunit protein uL6 from Neisseria meningitidis serogroup B (strain ATCC BAA-335 / MC58).